A 328-amino-acid polypeptide reads, in one-letter code: Malate dehydrogenase (328 aa).

11 to 17 serves as a coordination point for NAD(+); it reads GAAGQIG. Residues R92 and R98 each contribute to the substrate site. NAD(+) is bound by residues N105, Q112, and 129-131; that span reads VGN. Substrate-binding residues include N131 and R162. The active-site Proton acceptor is the H187.

It belongs to the LDH/MDH superfamily. MDH type 2 family.

It catalyses the reaction (S)-malate + NAD(+) = oxaloacetate + NADH + H(+). Catalyzes the reversible oxidation of malate to oxaloacetate. This chain is Malate dehydrogenase, found in Coxiella burnetii (strain CbuG_Q212) (Coxiella burnetii (strain Q212)).